Here is a 267-residue protein sequence, read N- to C-terminus: O-methyltransferase (267 aa).

Residues Gln-100 and His-145 each coordinate S-adenosyl-L-methionine.

The protein belongs to the methyltransferase superfamily.

Its pathway is antifungal biosynthesis. Functionally, O-methyltransferase; part of the gene cluster that mediates the biosynthesis of the tetrahydropyranyl antifungal agent lanomycin that acts as an inhibitor of CYP51 and blocks the ergosterol biosynthesis. The biosynthesis probably begins with the formation of an hexaketide, followed by methionine mediated alkylation of C-2 and C-6, and methylation of the reduced C-3 oxygen, pyran forming reductive ring closure, oxygenation of C-4, beta-keto reduction, enoyl reduction and dehydration of the remaining oxygens, and finally, acylation with glycine to complete the biosynthesis. This chain is O-methyltransferase, found in Pyrenophora dematioidea (Helminthosporium dematioideum).